The following is a 259-amino-acid chain: 14-3-3-like protein (259 aa).

Belongs to the 14-3-3 family.

This Helianthus annuus (Common sunflower) protein is 14-3-3-like protein.